Consider the following 454-residue polypeptide: Bifunctional protein GlmU (454 aa).

Positions 1-226 (MALNVVILAA…AVEVEGANNR (226 aa)) are pyrophosphorylase. UDP-N-acetyl-alpha-D-glucosamine contacts are provided by residues 8 to 11 (LAAG), Lys22, Gln73, 78 to 79 (GT), 100 to 102 (YGD), Gly137, Glu151, Asn166, and Asn224. Residue Asp102 participates in Mg(2+) binding. Asn224 serves as a coordination point for Mg(2+). A linker region spans residues 227–247 (VQLAQLERAYQARAAEKLMLE). The segment at 248 to 454 (GANLRDPARI…GWARPVKKAK (207 aa)) is N-acetyltransferase. The UDP-N-acetyl-alpha-D-glucosamine site is built by Arg330 and Lys348. The Proton acceptor role is filled by His360. UDP-N-acetyl-alpha-D-glucosamine is bound by residues Tyr363 and Asn374. Acetyl-CoA-binding positions include Ala377, 383–384 (NY), Ser402, Ala420, and Arg437.

The protein in the N-terminal section; belongs to the N-acetylglucosamine-1-phosphate uridyltransferase family. In the C-terminal section; belongs to the transferase hexapeptide repeat family. In terms of assembly, homotrimer. Mg(2+) serves as cofactor.

It is found in the cytoplasm. It catalyses the reaction alpha-D-glucosamine 1-phosphate + acetyl-CoA = N-acetyl-alpha-D-glucosamine 1-phosphate + CoA + H(+). The enzyme catalyses N-acetyl-alpha-D-glucosamine 1-phosphate + UTP + H(+) = UDP-N-acetyl-alpha-D-glucosamine + diphosphate. It participates in nucleotide-sugar biosynthesis; UDP-N-acetyl-alpha-D-glucosamine biosynthesis; N-acetyl-alpha-D-glucosamine 1-phosphate from alpha-D-glucosamine 6-phosphate (route II): step 2/2. The protein operates within nucleotide-sugar biosynthesis; UDP-N-acetyl-alpha-D-glucosamine biosynthesis; UDP-N-acetyl-alpha-D-glucosamine from N-acetyl-alpha-D-glucosamine 1-phosphate: step 1/1. Its pathway is bacterial outer membrane biogenesis; LPS lipid A biosynthesis. In terms of biological role, catalyzes the last two sequential reactions in the de novo biosynthetic pathway for UDP-N-acetylglucosamine (UDP-GlcNAc). The C-terminal domain catalyzes the transfer of acetyl group from acetyl coenzyme A to glucosamine-1-phosphate (GlcN-1-P) to produce N-acetylglucosamine-1-phosphate (GlcNAc-1-P), which is converted into UDP-GlcNAc by the transfer of uridine 5-monophosphate (from uridine 5-triphosphate), a reaction catalyzed by the N-terminal domain. The polypeptide is Bifunctional protein GlmU (Shewanella piezotolerans (strain WP3 / JCM 13877)).